Reading from the N-terminus, the 1052-residue chain is Mitotic checkpoint serine/threonine-protein kinase BUB1 beta (1052 aa).

Residues 56–219 (FESEIRFYSG…LEPSEPQRSS (164 aa)) enclose the BUB1 N-terminal domain. The Nuclear localization signal motif lies at 105 to 112 (GETRYYND). The segment at 146 to 179 (AQFYISWAEEYEARENFKKADIIFQEGIERKAEP) is necessary for interaction with KNL1. Disordered stretches follow at residues 206-256 (EEEA…NAVP) and 272-327 (ADTA…TSIP). Residues 217-225 (RSSLAELKS) carry the D-box motif. Lysine 243 carries the N6-acetyllysine; by PCAF modification. Serine 360 bears the Phosphoserine mark. Positions 361–381 (TRKPGREEGDPLQRVQSHQQG) are disordered. Serine 428 is modified (phosphoserine). The interval 496–552 (SNPREISPAENILQEQPDSKGSSMPFSIFDESLSDKKDKSPATGGPQVLNAQRRPLS) is disordered. Positions 508–520 (LQEQPDSKGSSMP) are enriched in polar residues. 2 positions are modified to phosphoserine: serine 535 and serine 659. At serine 665 the chain carries Phosphoserine; by PLK1. Phosphoserine is present on serine 686. A Protein kinase domain is found at 756-1040 (VIKQEHLTCD…TISPEALLTQ (285 aa)). An ATP-binding site is contributed by 762-770 (LTCDDYRLF). At threonine 781 the chain carries Phosphothreonine; by PLK1. Lysine 784 lines the ATP pocket. Aspartate 871 acts as the Proton acceptor in catalysis. At threonine 998 the chain carries Phosphothreonine; by PLK1. 2 positions are modified to phosphoserine: serine 1033 and serine 1050.

This sequence belongs to the protein kinase superfamily. Ser/Thr protein kinase family. BUB1 subfamily. In terms of assembly, interacts with CENPE. Interacts with PLK1. Part of a complex containing BUB3, CDC20 and BUB1B. Interacts with anaphase-promoting complex/cyclosome (APC/C). Interacts with KNL1. Interacts with KAT2B. Interacts with RIPK3. Interacts with the closed conformation form of MAD2L1. Interacts with CDC20. In terms of processing, proteolytically cleaved by caspase-3 in a cell cycle specific manner. The cleavage might be involved in the durability of the cell cycle delay. Post-translationally, acetylation at Lys-243 regulates its degradation and timing in anaphase entry. Ubiquitinated. Degraded by the proteasome. Ubiquitinated by UBR5, promoting disassembly of the mitotic checkpoint complex from the APC/C complex. In terms of processing, sumoylated with SUMO2 and SUMO3. The sumoylation mediates the association with CENPE at the kinetochore. Post-translationally, autophosphorylated in vitro. Intramolecular autophosphorylation stimulated by CENPE. Phosphorylated during mitosis and hyperphosphorylated in mitotically arrested cells. Phosphorylation at Ser-659 and Ser-1033 occurs at kinetochores upon mitotic entry with dephosphorylation at the onset of anaphase. Proteolytically cleaved by caspase-3 in a cell cycle specific manner. The cleavage might be involved in the durability of the cell cycle delay. Caspase-3 cleavage is associated with abrogation of the mitotic checkpoint. The major site of cleavage is at Asp-603. Highly expressed in thymus followed by spleen.

Its subcellular location is the cytoplasm. The protein resides in the nucleus. It localises to the chromosome. The protein localises to the centromere. It is found in the kinetochore. The enzyme catalyses L-seryl-[protein] + ATP = O-phospho-L-seryl-[protein] + ADP + H(+). It catalyses the reaction L-threonyl-[protein] + ATP = O-phospho-L-threonyl-[protein] + ADP + H(+). With respect to regulation, kinase activity stimulated by CENPE. Essential component of the mitotic checkpoint. Required for normal mitosis progression and tumor suppression. The mitotic checkpoint delays anaphase until all chromosomes are properly attached to the mitotic spindle. One of its checkpoint functions is to inhibit the activity of the anaphase-promoting complex/cyclosome (APC/C) by blocking the binding of CDC20 to APC/C, independently of its kinase activity. The other is to monitor kinetochore activities that depend on the kinetochore motor CENPE. Required for kinetochore localization of CENPE. Negatively regulates PLK1 activity in interphase cells and suppresses centrosome amplification. Also implicated in triggering apoptosis in polyploid cells that exit aberrantly from mitotic arrest. Essential for tumor suppression. May play a role in regulating aging and fertility. The chain is Mitotic checkpoint serine/threonine-protein kinase BUB1 beta (Bub1b) from Mus musculus (Mouse).